The chain runs to 324 residues: Esterase FPSE_08126 (324 aa).

Catalysis depends on residues serine 156, aspartate 255, and histidine 285.

Belongs to the AB hydrolase 3 family.

Esterase; part of the Fusarium detoxification of benzoxazolinone cluster involved in the degradation of benzoxazolinones produced by the host plant. Maize, wheat, and rye produce the 2 benzoxazinone phytoanticipins 2,4-dihy-droxy-7-methoxy-1,4-benzoxazin-3-one (DIMBOA) and 2,4-dihydroxy-1,4-benzoxazin-3-one (DIBOA) that, due to their inherent instability once released, spontaneously degrade to the more stable corresponding benzoxazolinones, 6-methoxy-2-benzoxazolinone (MBOA) and 2-benzoxazolinone (BOA), respectively. The first step in the detoxification of benzoxazolinones involves the hydrolysis of the cyclic ester bond of benzoxazolinones by the gamma-lactamase FDB1 to aminophenols. FDB1 is able to convert 2-benzoxazolinone (BOA) into 2-aminophenol (2-AP), as well as 6-methoxy-2-benzoxazolinone (MBOA) into 5-methoxy-2-aminophenol (2-AMP). The N-malonyltransferase FDB2 then metabolizes aminophenols via N-malonylation to non-toxic malonamic acids. FDB2 converts 2-AP into N-(2-hydroxyphenyl) malonamic acid (HPMA) and 2-AMP into N-(2-hydroxy-4-methoxyphenyl) malonamic acid (HMPMA). The cluster also contains 2 transcription factors (FDB3 and FPSE_08121), an aldo-keto reductase (FPSE_08125) that possibly associates with a ketone component of BOA and MBOA degradation, an esterase (FPSE_08126), an acyl-CoA transferase (FPSE_08120), a solute carrier protein (FPSE_08119) and a transmembrane transporter (FPSE_08127) proposed to shuttle metabolites of benzoxazolinone degradation. This Fusarium pseudograminearum (strain CS3096) (Wheat and barley crown-rot fungus) protein is Esterase FPSE_08126.